A 286-amino-acid chain; its full sequence is MSWLLFLAHRVALAALPCRRGSRGFGMFYAVRRGRKTGVFLTWNECRAQVDRFPAARFKKFATEDEAWAFVRKSASPEVSEGHENQHGQESEAKASKRLREPLDGDGHESAEPYAKHMKPSVEPAPPVSRDTFSYMGDFVVVYTDGCCSSNGRRRPRAGIGVYWGPGHPLNVGIRLPGRQTNQRAEIHAACKAIEQAKTQNINKLVLYTDSMFTINGITNWVQGWKKNGWKTSAGKEVINKEDFVALERLTQGMDIQWMHVPGHSGFIGNEEADRLAREGAKQSED.

Over residues 101 to 115 (EPLDGDGHESAEPYA) the composition is skewed to basic and acidic residues. The segment at 101–127 (EPLDGDGHESAEPYAKHMKPSVEPAPP) is disordered. The 147-residue stretch at 136 to 282 (MGDFVVVYTD…ADRLAREGAK (147 aa)) folds into the RNase H type-1 domain. Residues aspartate 145, glutamate 186, aspartate 210, and aspartate 274 each coordinate Mg(2+).

The protein belongs to the RNase H family. In terms of assembly, monomer. Mg(2+) serves as cofactor. Ubiquitous.

It localises to the cytoplasm. It catalyses the reaction Endonucleolytic cleavage to 5'-phosphomonoester.. With respect to regulation, in the presence of magnesium, manganese is inhibitory. Its function is as follows. Endonuclease that specifically degrades the RNA of RNA-DNA hybrids. Plays a role in RNA polymerase II (RNAp II) transcription termination by degrading R-loop RNA-DNA hybrid formation at G-rich pause sites located downstream of the poly(A) site and behind the elongating RNAp II. In Homo sapiens (Human), this protein is Ribonuclease H1 (RNASEH1).